We begin with the raw amino-acid sequence, 164 residues long: Endoribonuclease YbeY (164 aa).

Zn(2+) is bound by residues H117, H121, and H127.

This sequence belongs to the endoribonuclease YbeY family. The cofactor is Zn(2+).

The protein localises to the cytoplasm. Its function is as follows. Single strand-specific metallo-endoribonuclease involved in late-stage 70S ribosome quality control and in maturation of the 3' terminus of the 16S rRNA. The chain is Endoribonuclease YbeY from Mycoplasma mycoides subsp. mycoides SC (strain CCUG 32753 / NCTC 10114 / PG1).